We begin with the raw amino-acid sequence, 252 residues long: 4-hydroxy-tetrahydrodipicolinate reductase (252 aa).

NAD(+) is bound by residues 8-13 (GCSGKM), 85-87 (CTT), and 109-112 (SANM). The Proton donor/acceptor role is filled by His142. His143 serves as a coordination point for (S)-2,3,4,5-tetrahydrodipicolinate. The active-site Proton donor is the Lys146. 152–153 (GT) contacts (S)-2,3,4,5-tetrahydrodipicolinate.

This sequence belongs to the DapB family.

The protein resides in the cytoplasm. The catalysed reaction is (S)-2,3,4,5-tetrahydrodipicolinate + NAD(+) + H2O = (2S,4S)-4-hydroxy-2,3,4,5-tetrahydrodipicolinate + NADH + H(+). The enzyme catalyses (S)-2,3,4,5-tetrahydrodipicolinate + NADP(+) + H2O = (2S,4S)-4-hydroxy-2,3,4,5-tetrahydrodipicolinate + NADPH + H(+). It functions in the pathway amino-acid biosynthesis; L-lysine biosynthesis via DAP pathway; (S)-tetrahydrodipicolinate from L-aspartate: step 4/4. Functionally, catalyzes the conversion of 4-hydroxy-tetrahydrodipicolinate (HTPA) to tetrahydrodipicolinate. This Clostridium novyi (strain NT) protein is 4-hydroxy-tetrahydrodipicolinate reductase.